Reading from the N-terminus, the 246-residue chain is Ubiquinone biosynthesis O-methyltransferase (246 aa).

S-adenosyl-L-methionine-binding residues include arginine 40, glycine 70, aspartate 91, and methionine 135.

This sequence belongs to the methyltransferase superfamily. UbiG/COQ3 family.

It carries out the reaction a 3-demethylubiquinol + S-adenosyl-L-methionine = a ubiquinol + S-adenosyl-L-homocysteine + H(+). The catalysed reaction is a 3-(all-trans-polyprenyl)benzene-1,2-diol + S-adenosyl-L-methionine = a 2-methoxy-6-(all-trans-polyprenyl)phenol + S-adenosyl-L-homocysteine + H(+). It participates in cofactor biosynthesis; ubiquinone biosynthesis. O-methyltransferase that catalyzes the 2 O-methylation steps in the ubiquinone biosynthetic pathway. This Colwellia psychrerythraea (strain 34H / ATCC BAA-681) (Vibrio psychroerythus) protein is Ubiquinone biosynthesis O-methyltransferase.